The sequence spans 121 residues: Large ribosomal subunit protein uL14c (121 aa).

This sequence belongs to the universal ribosomal protein uL14 family. In terms of assembly, part of the 50S ribosomal subunit.

It localises to the plastid. The protein resides in the apicoplast. Functionally, binds to 23S rRNA. This chain is Large ribosomal subunit protein uL14c (rpl14), found in Eimeria tenella (Coccidian parasite).